Consider the following 255-residue polypeptide: uncharacterized protein (255 aa).

The NADP(+) site is built by Ile13, Arg37, Asp55, Asn81, Tyr148, Lys152, Val180, and Thr182. Tyr148 serves as the catalytic Proton donor. Catalysis depends on Lys152, which acts as the Lowers pKa of active site Tyr.

The protein belongs to the short-chain dehydrogenases/reductases (SDR) family.

Involved in osmoadaptation. This is an uncharacterized protein from Emericella nidulans (strain FGSC A4 / ATCC 38163 / CBS 112.46 / NRRL 194 / M139) (Aspergillus nidulans).